Reading from the N-terminus, the 512-residue chain is Protein SHC1 (512 aa).

The segment covering 101-113 (EQDEFENDVEDDA) has biased composition (acidic residues). Disordered regions lie at residues 101-122 (EQDE…EKSQ) and 144-164 (DGNS…ESVA). 4 Sel1-like repeats span residues 318–353 (PDAQ…KRMH), 354–389 (IESV…TKNH), 390–429 (PAAM…SMAS), and 433–470 (CGAP…ALGH).

This sequence belongs to the SKT5 family.

Its subcellular location is the cytoplasm. It is found in the cytoplasmic granule membrane. Its function is as follows. Required for the activation of chitin synthase III (CHS3) activity during the sporulation process. The sequence is that of Protein SHC1 (SHC1) from Saccharomyces cerevisiae (strain ATCC 204508 / S288c) (Baker's yeast).